An 854-amino-acid polypeptide reads, in one-letter code: Arsenate respiratory reductase molybdopterin-containing subunit ArrA (854 aa).

Residues 1–41 (MKKENQVNLGRRQLLKSTAAGTVLTGIGGTLSFTPIVEGIA) constitute a signal peptide (tat-type signal). One can recognise a 4Fe-4S Mo/W bis-MGD-type domain in the interval 54-110 (GEWLATTCQGCTSWCAKQIYVMDGRALKVRGNPNSGVHGMSSCPRQHLSLQQVYDPD). Positions 61, 64, 68, and 96 each coordinate [4Fe-4S] cluster. Arg-165 serves as a coordination point for arsenite. Tyr-166 contributes to the arsenate binding site. His-189 provides a ligand contact to arsenite. Residue Ser-190 participates in arsenate binding. Mo-bis(molybdopterin guanine dinucleotide) is bound at residue Cys-193. Lys-198 serves as a coordination point for arsenate. Tyr-210 lines the arsenite pocket.

The protein belongs to the prokaryotic molybdopterin-containing oxidoreductase family. Heterodimer composed of one large subunit (ArrA) and one small subunit (ArrB). [4Fe-4S] cluster is required as a cofactor. The cofactor is Mo-bis(molybdopterin guanine dinucleotide). Predicted to be exported by the Tat system. The position of the signal peptide cleavage has not been experimentally proven.

It is found in the periplasm. It carries out the reaction arsenite + A + H2O = arsenate + AH2 + H(+). Phosphate is a competitive inhibitor. Its function is as follows. Component of the arsenate respiratory reductase (Arr) complex, which catalyzes the reduction of arsenate (As(V)) to arsenite (As(III)). ArrA is the arsenate-binding subunit. The periplasmic localization of this complex may allow the cell to couple arsenate reduction to energy production before arsenate can be transported to the cell cytoplasm and enter the ars detoxification pathway, an energy-requiring process. In Shewanella sp. (strain ANA-3), this protein is Arsenate respiratory reductase molybdopterin-containing subunit ArrA.